Here is a 121-residue protein sequence, read N- to C-terminus: Estrogen receptor (121 aa).

The region spanning 1 to 121 is the NR LBD domain; the sequence is LFAPNLLLDR…IRHMSNKGME (121 aa). A lipid anchor (S-palmitoyl cysteine) is attached at Cys45.

The protein belongs to the nuclear hormone receptor family. NR3 subfamily. Binds DNA as a homodimer. Can form a heterodimer with ESR2. Interacts with coactivator NCOA5. Interacts with NCOA7; the interaction is ligand-inducible. Interacts with AKAP13, CUEDC2, HEXIM1, KDM5A, MAP1S, PELP1, SMARD1, and UBE1C. Interacts with MUC1; the interaction is stimulated by 7 beta-estradiol (E2) and enhances ERS1-mediated transcription. Interacts with DNTTIP2, and UIMC1. Interacts with KMT2D/MLL2. Interacts with ATAD2; the interaction is enhanced by estradiol. Interacts with KIF18A and LDB1. Interacts with RLIM (via its C-terminus). Interacts with MACROD1. Interacts with SH2D4A and PLCG. Interacts with SH2D4A; the interaction blocks binding to PLCG and inhibits estrogen-induced cell proliferation. Interacts with DYNLL1. Interacts with CCDC62; the interaction requires estradiol and appears to enhance the transcription of target genes. Interacts with NR2C1; the interaction prevents homodimerization of ESR1 and suppresses its transcriptional activity and cell growth. Interacts with DNAAF4. Interacts with PRMT2. Interacts with PI3KR1 or PIK3R2, SRC and PTK2/FAK1. Interacts with RBFOX2. Interacts with EP300; the interaction is estrogen-dependent and enhanced by CITED1. Interacts with CITED1; the interaction is estrogen-dependent. Interacts with FAM120B, FOXL2, PHB2 and SLC30A9. Interacts with coactivators NCOA3 and NCOA6. Interacts with STK3/MST2 only in the presence of SAV1 and vice-versa. Binds to CSNK1D. Interacts with NCOA2; NCOA2 can interact with ESR1 AF-1 and AF-2 domains simultaneously and mediate their transcriptional synergy. Interacts with DDX5. Interacts with NCOA1; the interaction seems to require a self-association of N-terminal and C-terminal regions. Interacts with ZNF366, DDX17, NFKB1, RELA, SP1 and SP3. Interacts with NRIP1. Interacts with GPER1; the interaction occurs in an estrogen-dependent manner. Interacts with CLOCK and the interaction is stimulated by estrogen. Interacts with TRIP4 (ufmylated); estrogen dependent. Interacts with LMTK3; the interaction phosphorylates ESR1 (in vitro) and protects it against proteasomal degradation. Interacts with CCAR2 (via N-terminus) in a ligand-independent manner. Interacts with ZFHX3. Interacts with SFR1 in a ligand-dependent and -independent manner. Interacts with DCAF13, LATS1 and DCAF1; regulates ESR1 ubiquitination and ubiquitin-mediated proteasomal degradation. Interacts (via DNA-binding domain) with POU4F2 (C-terminus); this interaction increases the estrogen receptor ESR1 transcriptional activity in a DNA- and ligand 17-beta-estradiol-independent manner. Interacts with ESRRB isoform 1. Interacts with UBE3A and WBP2. Interacts with GTF2B. Interacts with RBM39. In the absence of hormonal ligand, interacts with TACC1. Interacts with BAG1; the interaction is promoted in the absence of estradiol (17-beta-estradiol/E2). Interacts with and ubiquitinated by STUB1; the interaction is promoted in the absence of estradiol (17-beta-estradiol/E2). Interacts with NEDD8. Post-translationally, ubiquitinated; regulated by LATS1 via DCAF1 it leads to ESR1 proteasomal degradation. Deubiquitinated by OTUB1. Ubiquitinated by STUB1/CHIP; in the CA1 hippocampal region following loss of endogenous circulating estradiol (17-beta-estradiol/E2). Ubiquitinated by UBR5, leading to its degradation: UBR5 specifically recognizes and binds ligand-bound ESR1 when it is not associated with coactivators (NCOAs). In presence of NCOAs, the UBR5-degron is not accessible, preventing its ubiquitination and degradation. In terms of processing, palmitoylated at Cys-45 by ZDHHC7 and ZDHHC21. Palmitoylation is required for plasma membrane targeting and for rapid intracellular signaling via ERK and AKT kinases and cAMP generation, but not for signaling mediated by the nuclear hormone receptor. Phosphorylated by cyclin A/CDK2 and CK1. Phosphorylation probably enhances transcriptional activity. Dephosphorylation by PPP5C inhibits its transactivation activity. Phosphorylated by LMTK3 (in vitro). Post-translationally, dimethylated by PRMT1. Demethylated by JMJD6.

It localises to the nucleus. The protein localises to the cytoplasm. The protein resides in the golgi apparatus. It is found in the cell membrane. In terms of biological role, nuclear hormone receptor. The steroid hormones and their receptors are involved in the regulation of eukaryotic gene expression and affect cellular proliferation and differentiation in target tissues. Ligand-dependent nuclear transactivation involves either direct homodimer binding to a palindromic estrogen response element (ERE) sequence or association with other DNA-binding transcription factors, such as AP-1/c-Jun, c-Fos, ATF-2, Sp1 and Sp3, to mediate ERE-independent signaling. Ligand binding induces a conformational change allowing subsequent or combinatorial association with multiprotein coactivator complexes through LXXLL motifs of their respective components. Mutual transrepression occurs between the estrogen receptor (ER) and NF-kappa-B in a cell-type specific manner. Decreases NF-kappa-B DNA-binding activity and inhibits NF-kappa-B-mediated transcription from the IL6 promoter and displace RELA/p65 and associated coregulators from the promoter. Recruited to the NF-kappa-B response element of the CCL2 and IL8 promoters and can displace CREBBP. Present with NF-kappa-B components RELA/p65 and NFKB1/p50 on ERE sequences. Can also act synergistically with NF-kappa-B to activate transcription involving respective recruitment adjacent response elements; the function involves CREBBP. Can activate the transcriptional activity of TFF1. Also mediates membrane-initiated estrogen signaling involving various kinase cascades. Essential for MTA1-mediated transcriptional regulation of BRCA1 and BCAS3. Maintains neuronal survival in response to ischemic reperfusion injury when in the presence of circulating estradiol (17-beta-estradiol/E2). This chain is Estrogen receptor (ESR1), found in Macaca mulatta (Rhesus macaque).